The sequence spans 336 residues: Mitochondrial fission regulator 2 (336 aa).

A coiled-coil region spans residues 139 to 166 (QPDALLKISALEEELQRLRAQIATIITA). Residues 296–336 (HRQRDDSFGKENHSAEPSPFSSPDTPRIFQHTRRSQGRIHL) are disordered. Over residues 297–309 (RQRDDSFGKENHS) the composition is skewed to basic and acidic residues. Basic residues predominate over residues 325 to 336 (QHTRRSQGRIHL).

Belongs to the MTFR1 family.

It is found in the mitochondrion. Functionally, may play a role in mitochondrial aerobic respiration. Can also promote mitochondrial fission. The sequence is that of Mitochondrial fission regulator 2 (mtfr2) from Danio rerio (Zebrafish).